Reading from the N-terminus, the 356-residue chain is Tyrosine recombinase XerS (356 aa).

Residues 16-121 (LMPWFVLEYY…ALSSLYKYLT (106 aa)) enclose the Core-binding (CB) domain. Residues 169–354 (KFLDYVENEY…VNDEQKNALD (186 aa)) enclose the Tyr recombinase domain. Active-site residues include arginine 210, lysine 234, histidine 306, arginine 309, and histidine 332. Residue tyrosine 341 is the O-(3'-phospho-DNA)-tyrosine intermediate of the active site.

Belongs to the 'phage' integrase family. XerS subfamily.

It is found in the cytoplasm. Its activity is regulated as follows. FtsK is required for recombination. Its function is as follows. Site-specific tyrosine recombinase, which acts by catalyzing the cutting and rejoining of the recombining DNA molecules. Essential to convert dimers of the bacterial chromosome into monomers to permit their segregation at cell division. This Streptococcus thermophilus (strain CNRZ 1066) protein is Tyrosine recombinase XerS.